Consider the following 105-residue polypeptide: Pyrimidine/purine nucleoside phosphorylase (105 aa).

This sequence belongs to the nucleoside phosphorylase PpnP family.

It catalyses the reaction a purine D-ribonucleoside + phosphate = a purine nucleobase + alpha-D-ribose 1-phosphate. The enzyme catalyses adenosine + phosphate = alpha-D-ribose 1-phosphate + adenine. It carries out the reaction cytidine + phosphate = cytosine + alpha-D-ribose 1-phosphate. The catalysed reaction is guanosine + phosphate = alpha-D-ribose 1-phosphate + guanine. It catalyses the reaction inosine + phosphate = alpha-D-ribose 1-phosphate + hypoxanthine. The enzyme catalyses thymidine + phosphate = 2-deoxy-alpha-D-ribose 1-phosphate + thymine. It carries out the reaction uridine + phosphate = alpha-D-ribose 1-phosphate + uracil. The catalysed reaction is xanthosine + phosphate = alpha-D-ribose 1-phosphate + xanthine. In terms of biological role, catalyzes the phosphorolysis of diverse nucleosides, yielding D-ribose 1-phosphate and the respective free bases. Can use uridine, adenosine, guanosine, cytidine, thymidine, inosine and xanthosine as substrates. Also catalyzes the reverse reactions. This is Pyrimidine/purine nucleoside phosphorylase from Ralstonia pickettii (strain 12J).